The primary structure comprises 238 residues: Probable transcriptional regulatory protein SGO_0454 (238 aa).

This sequence belongs to the TACO1 family. YeeN subfamily.

It is found in the cytoplasm. The chain is Probable transcriptional regulatory protein SGO_0454 from Streptococcus gordonii (strain Challis / ATCC 35105 / BCRC 15272 / CH1 / DL1 / V288).